A 673-amino-acid chain; its full sequence is RAS guanyl-releasing protein 4 (673 aa).

2 stretches are compositionally biased toward basic residues: residues 1–10 and 20–32; these read MNRKDIKRKS and GRGRSRQARRHKT. Disordered regions lie at residues 1–34 and 164–188; these read MNRKDIKRKSHQECSGKAGGRGRSRQARRHKTCP and LGDASSLLSPGGPGPPPPMSSPGLG. The region spanning 49 to 175 is the N-terminal Ras-GEF domain; the sequence is GVLSESSCSE…DASSLLSPGG (127 aa). Low complexity predominate over residues 164–173; the sequence is LGDASSLLSP. In terms of domain architecture, Ras-GEF spans 201-432; it reads ETEELAQHLT…YELSYAREPR (232 aa). Residues 466–501 enclose the EF-hand domain; the sequence is HVEQLVESVFKNYDPEGRGSISLEDFERLSGNFPFA. The Phorbol-ester/DAG-type zinc-finger motif lies at 540–590; sequence LHAFQEVTFRKPTFCHSCSGFLWGVTKQGYRCRDCGLCCHRHCRDQVRVEC. Residues 592 to 633 are disordered; the sequence is KRPETKGDPGPPGAPVPATSLPPANCGSEESLSYTLSPDPES.

This sequence belongs to the RASGRP family. Expressed by mast cells and their progenitors (at protein level). Expressed by dendritic cells. As to expression, expressed in neutrophils.

Its subcellular location is the cytoplasm. It is found in the cell membrane. Its function is as follows. Functions as a cation- and diacylglycerol (DAG)-regulated nucleotide exchange factor activating Ras through the exchange of bound GDP for GTP. In neutrophils, participates in a phospholipase C-activating N-formyl peptide-activated GPCR (G protein-coupled receptor) signaling pathway by promoting Ras-mediated activation of PIK3CG/PI3Kgamma to promote neutrophil functional responses. In CD117(+) dendritic cells and mast cells, participates in an lipopolysaccharide (LPS)-activated signaling pathway that stimulates the production of interferon-gamma and other pro-inflammatory cytokines by natural killer (NK) cells. May function in mast cell differentiation. Does not appear to be required for the development of B-cells, DC-cells, T-cells, or NK-cells. Binds diacylglycerol (DAG). In terms of biological role, unable to bind diacylglycerol (DAG). This Mus musculus (Mouse) protein is RAS guanyl-releasing protein 4 (Rasgrp4).